Here is a 350-residue protein sequence, read N- to C-terminus: Small ribosomal subunit biogenesis GTPase RsgA (350 aa).

Positions 1–17 are enriched in polar residues; the sequence is MSKNKLSKGQQRRVNAN. Positions 1–27 are disordered; that stretch reads MSKNKLSKGQQRRVNANHQRRLKTSAE. The CP-type G domain occupies 104–273; it reads TSVLTRPDFY…VIDSPGVREF (170 aa). Residues 160–163 and 214–222 contribute to the GTP site; these read NKID and GQSGVGKSS. Residues Cys-297, Cys-302, His-304, and Cys-310 each contribute to the Zn(2+) site.

It belongs to the TRAFAC class YlqF/YawG GTPase family. RsgA subfamily. As to quaternary structure, monomer. Associates with 30S ribosomal subunit, binds 16S rRNA. Zn(2+) serves as cofactor.

The protein resides in the cytoplasm. One of several proteins that assist in the late maturation steps of the functional core of the 30S ribosomal subunit. Helps release RbfA from mature subunits. May play a role in the assembly of ribosomal proteins into the subunit. Circularly permuted GTPase that catalyzes slow GTP hydrolysis, GTPase activity is stimulated by the 30S ribosomal subunit. The chain is Small ribosomal subunit biogenesis GTPase RsgA from Salmonella dublin (strain CT_02021853).